A 114-amino-acid chain; its full sequence is Putative neurotoxin 7 (114 aa).

Belongs to the scolopendra neurotoxin 8 family. In terms of processing, contains 3 disulfide bonds. In terms of tissue distribution, expressed by the venom gland.

The protein localises to the secreted. The chain is Putative neurotoxin 7 from Scolopendra mutilans (Chinese red-headed centipede).